A 475-amino-acid polypeptide reads, in one-letter code: Trifunctional enzyme subunit beta, mitochondrial (475 aa).

Residues 1 to 34 (MTTILTYPFKNLPTASKWALRFSIRPLSCSSQLR) constitute a mitochondrion transit peptide. The residue at position 73 (K73) is an N6-acetyllysine; alternate. At K73 the chain carries N6-succinyllysine; alternate. The active-site Acyl-thioester intermediate is C139. An intramembrane segment occupies 174–221 (IRHSRKMRKLMLDLNKAKSMGQRLSLISKFRFNFLAPELPAVSEFSTS). K189 carries the post-translational modification N6-acetyllysine; alternate. K189 carries the post-translational modification N6-succinyllysine; alternate. K191, K273, and K292 each carry N6-succinyllysine. An N6-acetyllysine; alternate modification is found at K294. N6-succinyllysine; alternate is present on K294. K299 carries the N6-acetyllysine modification. At K333 the chain carries N6-acetyllysine; alternate. Residue K333 is modified to N6-succinyllysine; alternate. N6-acetyllysine occurs at positions 349 and 362. Catalysis depends on C459, which acts as the Proton donor/acceptor.

This sequence belongs to the thiolase-like superfamily. Thiolase family. In terms of assembly, heterotetramer of 2 alpha/HADHA and 2 beta/HADHB subunits; forms the mitochondrial trifunctional enzyme. Also purified as higher order heterooligomers including a 4 alpha/HADHA and 4 beta/HADHB heterooligomer which physiological significance remains unclear. The mitochondrial trifunctional enzyme interacts with MTLN. Interacts with RSAD2/viperin.

It is found in the mitochondrion. The protein localises to the mitochondrion inner membrane. The protein resides in the mitochondrion outer membrane. Its subcellular location is the endoplasmic reticulum. The catalysed reaction is an acyl-CoA + acetyl-CoA = a 3-oxoacyl-CoA + CoA. It carries out the reaction butanoyl-CoA + acetyl-CoA = 3-oxohexanoyl-CoA + CoA. The enzyme catalyses hexanoyl-CoA + acetyl-CoA = 3-oxooctanoyl-CoA + CoA. It catalyses the reaction octanoyl-CoA + acetyl-CoA = 3-oxodecanoyl-CoA + CoA. The catalysed reaction is decanoyl-CoA + acetyl-CoA = 3-oxododecanoyl-CoA + CoA. It carries out the reaction dodecanoyl-CoA + acetyl-CoA = 3-oxotetradecanoyl-CoA + CoA. The enzyme catalyses tetradecanoyl-CoA + acetyl-CoA = 3-oxohexadecanoyl-CoA + CoA. It functions in the pathway lipid metabolism; fatty acid beta-oxidation. In terms of biological role, mitochondrial trifunctional enzyme catalyzes the last three of the four reactions of the mitochondrial beta-oxidation pathway. The mitochondrial beta-oxidation pathway is the major energy-producing process in tissues and is performed through four consecutive reactions breaking down fatty acids into acetyl-CoA. Among the enzymes involved in this pathway, the trifunctional enzyme exhibits specificity for long-chain fatty acids. Mitochondrial trifunctional enzyme is a heterotetrameric complex composed of two proteins, the trifunctional enzyme subunit alpha/HADHA carries the 2,3-enoyl-CoA hydratase and the 3-hydroxyacyl-CoA dehydrogenase activities, while the trifunctional enzyme subunit beta/HADHB described here bears the 3-ketoacyl-CoA thiolase activity. In Pan troglodytes (Chimpanzee), this protein is Trifunctional enzyme subunit beta, mitochondrial (HADHB).